We begin with the raw amino-acid sequence, 320 residues long: 4-diphosphocytidyl-2-C-methyl-D-erythritol kinase (320 aa).

K20 is a catalytic residue. ATP is bound at residue 112–122; that stretch reads PVAGGMGGGSA. D154 is a catalytic residue.

This sequence belongs to the GHMP kinase family. IspE subfamily.

It catalyses the reaction 4-CDP-2-C-methyl-D-erythritol + ATP = 4-CDP-2-C-methyl-D-erythritol 2-phosphate + ADP + H(+). It participates in isoprenoid biosynthesis; isopentenyl diphosphate biosynthesis via DXP pathway; isopentenyl diphosphate from 1-deoxy-D-xylulose 5-phosphate: step 3/6. In terms of biological role, catalyzes the phosphorylation of the position 2 hydroxy group of 4-diphosphocytidyl-2C-methyl-D-erythritol. This Arthrobacter sp. (strain FB24) protein is 4-diphosphocytidyl-2-C-methyl-D-erythritol kinase.